A 194-amino-acid chain; its full sequence is Lipoprotein signal peptidase (194 aa).

2 helical membrane passes run 75-95 and 97-117; these read TIFL…MICS and TIGS…NLID. Catalysis depends on residues aspartate 126 and aspartate 144. Residues 135 to 155 form a helical membrane-spanning segment; the sequence is YSFPVFNLADCFITLGVIILM.

Belongs to the peptidase A8 family.

Its subcellular location is the cell inner membrane. The enzyme catalyses Release of signal peptides from bacterial membrane prolipoproteins. Hydrolyzes -Xaa-Yaa-Zaa-|-(S,diacylglyceryl)Cys-, in which Xaa is hydrophobic (preferably Leu), and Yaa (Ala or Ser) and Zaa (Gly or Ala) have small, neutral side chains.. The protein operates within protein modification; lipoprotein biosynthesis (signal peptide cleavage). Its function is as follows. This protein specifically catalyzes the removal of signal peptides from prolipoproteins. In Rickettsia prowazekii (strain Madrid E), this protein is Lipoprotein signal peptidase.